A 274-amino-acid polypeptide reads, in one-letter code: Hematopoietically-expressed homeobox protein hhex (274 aa).

Residues 139-198 (RKGGQVRFSNDQTIELEKKFETQKYLSPPERKRLAKMLQLSERQVKTWFQNRRAKWRRLK) constitute a DNA-binding region (homeobox). The interval 197-274 (LKQENPQGNK…GDKGFYNCAH (78 aa)) is disordered. Polar residues predominate over residues 237–248 (DEPTSSPTSQET). The span at 249–263 (LDSEVSDDSDQEVDI) shows a compositional bias: acidic residues.

As to expression, expressed in the most dorsoanterior endomesoderm of the blastula and gastrula embryo, and later is restricted to the forming liver diverticulum.

The protein resides in the nucleus. Functionally, recognizes the DNA sequence 5'-ATTAA-3'. Transcriptional repressor. Regulates the differentiation of both endothelial and blood cells. Probably plays a role in the proliferation of vascular endothelial cells during blood vessel development. Establishes anterior identity at two levels; acts early to enhance canonical wnt-signaling by repressing expression of tle4, and acts later to inhibit nodal-signaling by directly targeting nodal/nr1 and nodal2/nr2. May play a role in liver development. Induces heart development. The polypeptide is Hematopoietically-expressed homeobox protein hhex (Xenopus tropicalis (Western clawed frog)).